The primary structure comprises 212 residues: Protein-L-isoaspartate O-methyltransferase 1 (212 aa).

Ser-60 is a catalytic residue.

Belongs to the methyltransferase superfamily. L-isoaspartyl/D-aspartyl protein methyltransferase family.

It localises to the cytoplasm. The catalysed reaction is [protein]-L-isoaspartate + S-adenosyl-L-methionine = [protein]-L-isoaspartate alpha-methyl ester + S-adenosyl-L-homocysteine. In terms of biological role, catalyzes the methyl esterification of L-isoaspartyl residues in peptides and proteins that result from spontaneous decomposition of normal L-aspartyl and L-asparaginyl residues. It plays a role in the repair and/or degradation of damaged proteins. This is Protein-L-isoaspartate O-methyltransferase 1 from Anaeromyxobacter sp. (strain Fw109-5).